The primary structure comprises 360 residues: Pyrimidine monooxygenase RutA (360 aa).

FMN contacts are provided by residues 49–50 (IK), Asn-115, Glu-124, 140–141 (RY), and Ser-190.

Belongs to the NtaA/SnaA/DszA monooxygenase family. RutA subfamily.

The catalysed reaction is uracil + FMNH2 + NADH + O2 = (Z)-3-ureidoacrylate + FMN + NAD(+) + H2O + H(+). The enzyme catalyses thymine + FMNH2 + NADH + O2 = (Z)-2-methylureidoacrylate + FMN + NAD(+) + H2O + H(+). Its function is as follows. Catalyzes the pyrimidine ring opening between N-3 and C-4 by an unusual flavin hydroperoxide-catalyzed mechanism, adding oxygen atoms in the process to yield ureidoacrylate peracid, that immediately reacts with FMN forming ureidoacrylate and FMN-N(5)-oxide. The FMN-N(5)-oxide reacts spontaneously with NADH to produce FMN. Requires the flavin reductase RutF to regenerate FMN in vivo. The polypeptide is Pyrimidine monooxygenase RutA (Bradyrhizobium sp. (strain BTAi1 / ATCC BAA-1182)).